The sequence spans 386 residues: 1-deoxy-D-xylulose 5-phosphate reductoisomerase (386 aa).

NADPH-binding residues include Thr-10, Gly-11, Ser-12, Ile-13, Gly-36, Asn-38, and Asn-122. 1-deoxy-D-xylulose 5-phosphate is bound at residue Lys-123. Glu-124 lines the NADPH pocket. Asp-148 lines the Mn(2+) pocket. 1-deoxy-D-xylulose 5-phosphate-binding residues include Ser-149, Glu-150, Ser-174, and His-197. Residue Glu-150 participates in Mn(2+) binding. Gly-203 contacts NADPH. 4 residues coordinate 1-deoxy-D-xylulose 5-phosphate: Ser-210, Asn-215, Lys-216, and Glu-219. Mn(2+) is bound at residue Glu-219.

It belongs to the DXR family. Mg(2+) is required as a cofactor. Requires Mn(2+) as cofactor.

The enzyme catalyses 2-C-methyl-D-erythritol 4-phosphate + NADP(+) = 1-deoxy-D-xylulose 5-phosphate + NADPH + H(+). The protein operates within isoprenoid biosynthesis; isopentenyl diphosphate biosynthesis via DXP pathway; isopentenyl diphosphate from 1-deoxy-D-xylulose 5-phosphate: step 1/6. Functionally, catalyzes the NADPH-dependent rearrangement and reduction of 1-deoxy-D-xylulose-5-phosphate (DXP) to 2-C-methyl-D-erythritol 4-phosphate (MEP). This is 1-deoxy-D-xylulose 5-phosphate reductoisomerase from Geobacter sulfurreducens (strain ATCC 51573 / DSM 12127 / PCA).